A 49-amino-acid chain; its full sequence is uncharacterized protein (49 aa).

The chain crosses the membrane as a helical span at residues 16–36 (WTCHTGFYLMILLVLFFMYGF).

The protein localises to the cell membrane. This is an uncharacterized protein from Bacillus subtilis (strain 168).